The primary structure comprises 145 residues: Protein SprT-like (145 aa).

The SprT-like domain maps to 4–140; it reads TNYVQEVSLA…VCGNCHGKLI (137 aa). Position 64 (histidine 64) interacts with Zn(2+). Glutamate 65 is an active-site residue. Histidine 68 is a binding site for Zn(2+).

Belongs to the SprT family. Zn(2+) serves as cofactor.

Its subcellular location is the cytoplasm. This is Protein SprT-like from Streptococcus pyogenes serotype M18 (strain MGAS8232).